Reading from the N-terminus, the 315-residue chain is 4-hydroxy-3-methylbut-2-enyl diphosphate reductase (315 aa).

C12 contributes to the [4Fe-4S] cluster binding site. Residues H41 and H74 each contribute to the (2E)-4-hydroxy-3-methylbut-2-enyl diphosphate site. Residues H41 and H74 each contribute to the dimethylallyl diphosphate site. Isopentenyl diphosphate contacts are provided by H41 and H74. Position 96 (C96) interacts with [4Fe-4S] cluster. Residue H124 participates in (2E)-4-hydroxy-3-methylbut-2-enyl diphosphate binding. H124 is a binding site for dimethylallyl diphosphate. H124 is an isopentenyl diphosphate binding site. The active-site Proton donor is the E126. (2E)-4-hydroxy-3-methylbut-2-enyl diphosphate is bound at residue T168. Residue C198 coordinates [4Fe-4S] cluster. The (2E)-4-hydroxy-3-methylbut-2-enyl diphosphate site is built by S226, S227, N228, and S270. Dimethylallyl diphosphate contacts are provided by S226, S227, N228, and S270. The isopentenyl diphosphate site is built by S226, S227, N228, and S270.

This sequence belongs to the IspH family. Requires [4Fe-4S] cluster as cofactor.

It carries out the reaction isopentenyl diphosphate + 2 oxidized [2Fe-2S]-[ferredoxin] + H2O = (2E)-4-hydroxy-3-methylbut-2-enyl diphosphate + 2 reduced [2Fe-2S]-[ferredoxin] + 2 H(+). It catalyses the reaction dimethylallyl diphosphate + 2 oxidized [2Fe-2S]-[ferredoxin] + H2O = (2E)-4-hydroxy-3-methylbut-2-enyl diphosphate + 2 reduced [2Fe-2S]-[ferredoxin] + 2 H(+). Its pathway is isoprenoid biosynthesis; dimethylallyl diphosphate biosynthesis; dimethylallyl diphosphate from (2E)-4-hydroxy-3-methylbutenyl diphosphate: step 1/1. It participates in isoprenoid biosynthesis; isopentenyl diphosphate biosynthesis via DXP pathway; isopentenyl diphosphate from 1-deoxy-D-xylulose 5-phosphate: step 6/6. Catalyzes the conversion of 1-hydroxy-2-methyl-2-(E)-butenyl 4-diphosphate (HMBPP) into a mixture of isopentenyl diphosphate (IPP) and dimethylallyl diphosphate (DMAPP). Acts in the terminal step of the DOXP/MEP pathway for isoprenoid precursor biosynthesis. This chain is 4-hydroxy-3-methylbut-2-enyl diphosphate reductase, found in Pseudomonas putida (strain ATCC 700007 / DSM 6899 / JCM 31910 / BCRC 17059 / LMG 24140 / F1).